A 474-amino-acid polypeptide reads, in one-letter code: Methylenetetrahydrofolate--tRNA-(uracil-5-)-methyltransferase TrmFO (474 aa).

13–18 is a binding site for FAD; that stretch reads GGGLAG.

The protein belongs to the MnmG family. TrmFO subfamily. It depends on FAD as a cofactor.

The protein localises to the cytoplasm. The enzyme catalyses uridine(54) in tRNA + (6R)-5,10-methylene-5,6,7,8-tetrahydrofolate + NADH + H(+) = 5-methyluridine(54) in tRNA + (6S)-5,6,7,8-tetrahydrofolate + NAD(+). The catalysed reaction is uridine(54) in tRNA + (6R)-5,10-methylene-5,6,7,8-tetrahydrofolate + NADPH + H(+) = 5-methyluridine(54) in tRNA + (6S)-5,6,7,8-tetrahydrofolate + NADP(+). Functionally, catalyzes the folate-dependent formation of 5-methyl-uridine at position 54 (M-5-U54) in all tRNAs. The chain is Methylenetetrahydrofolate--tRNA-(uracil-5-)-methyltransferase TrmFO from Bartonella tribocorum (strain CIP 105476 / IBS 506).